Here is a 134-residue protein sequence, read N- to C-terminus: Histone H2A (134 aa).

Residues 1–11 (MTGGGKSGGKA) are compositionally biased toward gly residues. The tract at residues 1 to 25 (MTGGGKSGGKASGSKNAQSRSSKAG) is disordered. Residues Lys6 and Lys10 each carry the N6-acetyllysine modification. N5-methylglutamine is present on Gln107. Ser131 carries the post-translational modification Phosphoserine. The [ST]-Q motif signature appears at 131 to 132 (SQ).

It belongs to the histone H2A family. As to quaternary structure, the nucleosome is a histone octamer containing two molecules each of H2A, H2B, H3 and H4 assembled in one H3-H4 heterotetramer and two H2A-H2B heterodimers. The octamer wraps approximately 147 bp of DNA. Post-translationally, phosphorylated to form H2AS128ph (gamma-H2A) in response to DNA double-strand breaks (DSBs) generated by exogenous genotoxic agents and by stalled replication forks. Phosphorylation is dependent on the DNA damage checkpoint kinases mec-1/ATR and tel-1/ATM, spreads on either side of a detected DSB site and may mark the surrounding chromatin for recruitment of proteins required for DNA damage signaling and repair. Gamma-H2A is removed from the DNA prior to the strand invasion-primer extension step of the repair process and subsequently dephosphorylated. Dephosphorylation is necessary for efficient recovery from the DNA damage checkpoint. In terms of processing, acetylated by esa-1 to form H2AK4ac and H2AK7ac.

The protein localises to the nucleus. It is found in the chromosome. Core component of nucleosome which plays a central role in DNA double strand break (DSB) repair. Nucleosomes wrap and compact DNA into chromatin, limiting DNA accessibility to the cellular machineries which require DNA as a template. Histones thereby play a central role in transcription regulation, DNA repair, DNA replication and chromosomal stability. DNA accessibility is regulated via a complex set of post-translational modifications of histones, also called histone code, and nucleosome remodeling. The sequence is that of Histone H2A (hh2a) from Neurospora crassa (strain ATCC 24698 / 74-OR23-1A / CBS 708.71 / DSM 1257 / FGSC 987).